The following is a 338-amino-acid chain: Glyceraldehyde-3-phosphate dehydrogenase 2 (338 aa).

NAD(+) contacts are provided by residues 13 to 14 (TI) and G111. 140–142 (SCN) lines the D-glyceraldehyde 3-phosphate pocket. C141 (nucleophile) is an active-site residue. R169 contributes to the NAD(+) binding site. 195–196 (HG) lines the D-glyceraldehyde 3-phosphate pocket. Q300 lines the NAD(+) pocket.

It belongs to the glyceraldehyde-3-phosphate dehydrogenase family. Homotetramer.

It localises to the cytoplasm. The catalysed reaction is D-glyceraldehyde 3-phosphate + phosphate + NADP(+) = (2R)-3-phospho-glyceroyl phosphate + NADPH + H(+). It carries out the reaction D-glyceraldehyde 3-phosphate + phosphate + NAD(+) = (2R)-3-phospho-glyceroyl phosphate + NADH + H(+). Its pathway is carbohydrate degradation; glycolysis; pyruvate from D-glyceraldehyde 3-phosphate: step 1/5. This is Glyceraldehyde-3-phosphate dehydrogenase 2 from Methanosarcina barkeri (strain Fusaro / DSM 804).